We begin with the raw amino-acid sequence, 161 residues long: HMG1/2-like protein (161 aa).

Disordered regions lie at residues 1–46, 60–91, and 113–161; these read MKGA…KRAP, FKQKNPKNKSVAAVGKAAGERWKSLSESEKAP, and GESA…DDDE. Basic and acidic residues-rich tracts occupy residues 10–27 and 77–89; these read AKADAKLAVKSKGAEKPA and AGERWKSLSESEK. Positions 42–111 form a DNA-binding region, HMG box; sequence PKRAPSAFFV…EYNKAIAAYN (70 aa). Over residues 114-123 the composition is skewed to low complexity; the sequence is ESAAAAAPKK. Over residues 145–161 the composition is skewed to acidic residues; the sequence is NDDDDDEGSDEDEDDDE.

This sequence belongs to the HMGB family.

It localises to the nucleus. In Triticum aestivum (Wheat), this protein is HMG1/2-like protein.